We begin with the raw amino-acid sequence, 1107 residues long: Rho GTPase-activating protein 45 (1107 aa).

A disordered region spans residues 1–99; it reads MFSRKKRELM…SPPESGEGPF (99 aa). Low complexity predominate over residues 37 to 55; sequence DSSNDLASSPPSNSSPVSS. The span at 56–66 shows a compositional bias: polar residues; it reads GTLKRPSSLSR. Coiled-coil stretches lie at residues 103–132 and 363–485; these read EDIS…EELK and NMRR…QSDQ. Residues 261–524 enclose the F-BAR domain; the sequence is EDVDVILQRS…SSKLYDLGQQ (264 aa). 3 stretches are compositionally biased toward basic and acidic residues: residues 414–423, 434–444, and 573–588; these read NATRAEEEQS, RRAEEEAKNRA, and ENKE…ERRG. Disordered regions lie at residues 414-444 and 564-595; these read NATR…KNRA and FNSQ…HQVH. A Phorbol-ester/DAG-type zinc finger spans residues 671–716; that stretch reads THRLRKLRTPSKCRECNSYVYFQGAECEECSLACHKKCLETLAIQC. In terms of domain architecture, Rho-GAP spans 730 to 942; it reads RDFSETALRS…TLIIFYSTIF (213 aa). The tract at residues 981–1036 is disordered; it reads LTPEYQIPVFKEPGASTVESDSESDGAEDIPGTWKPQTTRGHLTKEASVTSAEDIP. The span at 1015 to 1031 shows a compositional bias: polar residues; that stretch reads KPQTTRGHLTKEASVTS.

The protein localises to the cytoplasm. It is found in the cell projection. It localises to the ruffle membrane. Functionally, contains a GTPase activator for the Rho-type GTPases (RhoGAP) domain that would be able to negatively regulate the actin cytoskeleton as well as cell spreading. However, also contains N-terminally a BAR-domin which is able to play an autoinhibitory effect on this RhoGAP activity. In Xenopus laevis (African clawed frog), this protein is Rho GTPase-activating protein 45.